Consider the following 320-residue polypeptide: Undecaprenyl-diphosphatase (320 aa).

8 helical membrane-spanning segments follow: residues 9-29 (FVLV…LEVF), 82-102 (GVAF…WYFW), 130-150 (LGII…KKLI), 161-181 (LGAI…GEKL), 191-211 (LTMQ…IPGV), 236-256 (FLLG…DVFA), 265-285 (LPLI…IAGL), and 296-316 (VFIW…SAGI).

Belongs to the UppP family.

It localises to the cell inner membrane. The catalysed reaction is di-trans,octa-cis-undecaprenyl diphosphate + H2O = di-trans,octa-cis-undecaprenyl phosphate + phosphate + H(+). Catalyzes the dephosphorylation of undecaprenyl diphosphate (UPP). Confers resistance to bacitracin. This chain is Undecaprenyl-diphosphatase, found in Trichormus variabilis (strain ATCC 29413 / PCC 7937) (Anabaena variabilis).